The following is a 193-amino-acid chain: Ribonuclease HII (193 aa).

The RNase H type-2 domain maps to 1 to 193; the sequence is MTLGIDEAGR…SFALKNNWFS (193 aa). A divalent metal cation is bound by residues Asp-6, Glu-7, and Asp-103.

The protein belongs to the RNase HII family. The cofactor is Mn(2+). Mg(2+) is required as a cofactor.

It localises to the cytoplasm. The catalysed reaction is Endonucleolytic cleavage to 5'-phosphomonoester.. Endonuclease that specifically degrades the RNA of RNA-DNA hybrids. This chain is Ribonuclease HII, found in Helicobacter acinonychis (strain Sheeba).